The sequence spans 148 residues: Glycine cleavage system H protein 5 (148 aa).

The Lipoyl-binding domain maps to 33-115; it reads VFTIGLTSVA…YGQGWIAKVK (83 aa). K74 is modified (N6-lipoyllysine).

It belongs to the GcvH family. The glycine cleavage system is composed of four proteins: P, T, L and H. The cofactor is (R)-lipoate.

The glycine cleavage system catalyzes the degradation of glycine. The H protein shuttles the methylamine group of glycine from the P protein to the T protein. In Aquifex aeolicus (strain VF5), this protein is Glycine cleavage system H protein 5.